A 207-amino-acid polypeptide reads, in one-letter code: Urease accessory protein UreE (207 aa).

The span at 170 to 194 shows a compositional bias: basic and acidic residues; sequence EHHGHSHSHSHDHDHDHDHDHDHQH. Positions 170–207 are disordered; that stretch reads EHHGHSHSHSHDHDHDHDHDHDHQHGPCCSHGHHHGHR.

The protein belongs to the UreE family.

The protein resides in the cytoplasm. Involved in urease metallocenter assembly. Binds nickel. Probably functions as a nickel donor during metallocenter assembly. The sequence is that of Urease accessory protein UreE from Burkholderia pseudomallei (strain 1106a).